We begin with the raw amino-acid sequence, 301 residues long: 4-hydroxy-tetrahydrodipicolinate synthase (301 aa).

Residue Thr-57 participates in pyruvate binding. The active-site Proton donor/acceptor is the Tyr-145. The active-site Schiff-base intermediate with substrate is Lys-173. Ile-213 contacts pyruvate.

Belongs to the DapA family. Homotetramer; dimer of dimers.

It localises to the cytoplasm. It carries out the reaction L-aspartate 4-semialdehyde + pyruvate = (2S,4S)-4-hydroxy-2,3,4,5-tetrahydrodipicolinate + H2O + H(+). It functions in the pathway amino-acid biosynthesis; L-lysine biosynthesis via DAP pathway; (S)-tetrahydrodipicolinate from L-aspartate: step 3/4. Its function is as follows. Catalyzes the condensation of (S)-aspartate-beta-semialdehyde [(S)-ASA] and pyruvate to 4-hydroxy-tetrahydrodipicolinate (HTPA). In Corynebacterium diphtheriae (strain ATCC 700971 / NCTC 13129 / Biotype gravis), this protein is 4-hydroxy-tetrahydrodipicolinate synthase.